Consider the following 248-residue polypeptide: ATP synthase subunit a, chloroplastic (248 aa).

The next 5 helical transmembrane spans lie at Gly-35–Gly-55, Val-94–Ile-114, Ile-133–Ser-153, Val-202–Ala-222, and Ser-224–Gly-244.

This sequence belongs to the ATPase A chain family. As to quaternary structure, F-type ATPases have 2 components, CF(1) - the catalytic core - and CF(0) - the membrane proton channel. CF(1) has five subunits: alpha(3), beta(3), gamma(1), delta(1), epsilon(1). CF(0) has four main subunits: a, b, b' and c.

The protein localises to the plastid. It localises to the chloroplast thylakoid membrane. Functionally, key component of the proton channel; it plays a direct role in the translocation of protons across the membrane. The sequence is that of ATP synthase subunit a, chloroplastic from Pyropia yezoensis (Susabi-nori).